We begin with the raw amino-acid sequence, 199 residues long: FMN-dependent NADH:quinone oxidoreductase 2 (199 aa).

Residues serine 10, 16–18 (SVS), and 96–99 (MYNF) contribute to the FMN site.

It belongs to the azoreductase type 1 family. In terms of assembly, homodimer. FMN serves as cofactor.

It catalyses the reaction 2 a quinone + NADH + H(+) = 2 a 1,4-benzosemiquinone + NAD(+). The catalysed reaction is N,N-dimethyl-1,4-phenylenediamine + anthranilate + 2 NAD(+) = 2-(4-dimethylaminophenyl)diazenylbenzoate + 2 NADH + 2 H(+). Quinone reductase that provides resistance to thiol-specific stress caused by electrophilic quinones. In terms of biological role, also exhibits azoreductase activity. Catalyzes the reductive cleavage of the azo bond in aromatic azo compounds to the corresponding amines. The protein is FMN-dependent NADH:quinone oxidoreductase 2 of Pseudomonas fluorescens (strain Pf0-1).